A 592-amino-acid chain; its full sequence is Aspartate--tRNA ligase (592 aa).

Glu171 contacts L-aspartate. Residues 195–198 (QLFK) form an aspartate region. Arg217 contacts L-aspartate. Residues 217-219 (RDE) and Gln226 each bind ATP. His448 is a binding site for L-aspartate. Residue Glu482 coordinates ATP. Arg489 lines the L-aspartate pocket. 534–537 (GLDR) lines the ATP pocket.

It belongs to the class-II aminoacyl-tRNA synthetase family. Type 1 subfamily. In terms of assembly, homodimer.

The protein localises to the cytoplasm. It carries out the reaction tRNA(Asp) + L-aspartate + ATP = L-aspartyl-tRNA(Asp) + AMP + diphosphate. Its function is as follows. Catalyzes the attachment of L-aspartate to tRNA(Asp) in a two-step reaction: L-aspartate is first activated by ATP to form Asp-AMP and then transferred to the acceptor end of tRNA(Asp). The sequence is that of Aspartate--tRNA ligase from Vibrio campbellii (strain ATCC BAA-1116).